We begin with the raw amino-acid sequence, 138 residues long: uncharacterized protein (138 aa).

It to phage 186 CP81.

This is an uncharacterized protein from Salmonella typhimurium (strain LT2 / SGSC1412 / ATCC 700720).